The chain runs to 406 residues: MSELLATYVLTHREDEQVNRKAEQIALGLTVGSWTDLPQLKKEQLQKHKGRVEKVTEKFAPAENGLYQSEVTIAYPEANFSADIPAVLSTIFGKLSLDGKVKLVDIQFSDRFKKSLPGPVFGIDGIRKKTGVFDRPLLMSIFKGVIGRDMTDLKEQLRLQALGGVDFIKDDEILFESPLAPFEDRIKEGKKILKETYEETGHRTLYAVHLTGRTFELRDRARKAAELGADALLFNVFAYGLDVMQSLAEDPDIRLPIMAHPAVSGALTSSPEYGFSHSLLLGKLNRYAGADLSLFPSPYGSVALPKKDAFGIYEACVKEDSVQKTFPVPSAGIHPGMVPVLMKDFGLDHVINAGGGIHGHPRGAIGGGKAFRSIIDAVIHGESIQEKTASCQDLKAALELWGRVVE.

Lys94 serves as the catalytic Proton acceptor. Substrate contacts are provided by residues Lys143, 169-172 (KDDE), His260, Gly332, and 354-355 (GG). 3 residues coordinate Mg(2+): Lys169, Asp171, and Glu172. An N6-carboxylysine modification is found at Lys169.

This sequence belongs to the RuBisCO large chain family. Type IV subfamily. As to quaternary structure, homodimer. Requires Mg(2+) as cofactor.

The enzyme catalyses 5-methylsulfanyl-2,3-dioxopentyl phosphate = 2-hydroxy-5-methylsulfanyl-3-oxopent-1-enyl phosphate. The protein operates within amino-acid biosynthesis; L-methionine biosynthesis via salvage pathway; L-methionine from S-methyl-5-thio-alpha-D-ribose 1-phosphate: step 3/6. Its function is as follows. Catalyzes the enolization of 2,3-diketo-5-methylthiopentyl-1-phosphate (DK-MTP-1-P) into 2-hydroxy-3-keto-5-methylthiopentenyl-1-phosphate (HK-MTPenyl-1-P). This Bacillus pumilus (strain SAFR-032) protein is 2,3-diketo-5-methylthiopentyl-1-phosphate enolase.